The chain runs to 288 residues: 4-hydroxy-tetrahydrodipicolinate synthase (288 aa).

Residue threonine 42 coordinates pyruvate. Catalysis depends on tyrosine 129, which acts as the Proton donor/acceptor. The active-site Schiff-base intermediate with substrate is lysine 158. Isoleucine 200 is a pyruvate binding site.

It belongs to the DapA family. As to quaternary structure, homotetramer; dimer of dimers.

The protein resides in the cytoplasm. The catalysed reaction is L-aspartate 4-semialdehyde + pyruvate = (2S,4S)-4-hydroxy-2,3,4,5-tetrahydrodipicolinate + H2O + H(+). It functions in the pathway amino-acid biosynthesis; L-lysine biosynthesis via DAP pathway; (S)-tetrahydrodipicolinate from L-aspartate: step 3/4. Catalyzes the condensation of (S)-aspartate-beta-semialdehyde [(S)-ASA] and pyruvate to 4-hydroxy-tetrahydrodipicolinate (HTPA). The protein is 4-hydroxy-tetrahydrodipicolinate synthase of Thermosipho melanesiensis (strain DSM 12029 / CIP 104789 / BI429).